The chain runs to 123 residues: Fluoride-specific ion channel FluC (123 aa).

Helical transmembrane passes span 1–21 (MQWL…GWLA), 32–52 (LGTL…LVWF), 66–86 (FVIT…AEVF), and 94–114 (LLAA…ATAL). Na(+) is bound by residues Gly73 and Thr76.

This sequence belongs to the fluoride channel Fluc/FEX (TC 1.A.43) family.

Its subcellular location is the cell inner membrane. The enzyme catalyses fluoride(in) = fluoride(out). With respect to regulation, na(+) is not transported, but it plays an essential structural role and its presence is essential for fluoride channel function. Fluoride-specific ion channel. Important for reducing fluoride concentration in the cell, thus reducing its toxicity. The sequence is that of Fluoride-specific ion channel FluC from Psychrobacter arcticus (strain DSM 17307 / VKM B-2377 / 273-4).